The primary structure comprises 228 residues: Cytidylate kinase (228 aa).

10 to 18 lines the ATP pocket; that stretch reads GPSGSGKGT.

The protein belongs to the cytidylate kinase family. Type 1 subfamily.

Its subcellular location is the cytoplasm. It carries out the reaction CMP + ATP = CDP + ADP. The enzyme catalyses dCMP + ATP = dCDP + ADP. This is Cytidylate kinase from Acinetobacter baumannii (strain ACICU).